The chain runs to 306 residues: Aspartate carbamoyltransferase catalytic subunit (306 aa).

Carbamoyl phosphate contacts are provided by Arg-54 and Thr-55. Residue Lys-83 participates in L-aspartate binding. Positions 104, 132, and 135 each coordinate carbamoyl phosphate. Residues Arg-165 and Arg-227 each contribute to the L-aspartate site. Leu-266 and Pro-267 together coordinate carbamoyl phosphate.

The protein belongs to the aspartate/ornithine carbamoyltransferase superfamily. ATCase family. Heterododecamer (2C3:3R2) of six catalytic PyrB chains organized as two trimers (C3), and six regulatory PyrI chains organized as three dimers (R2).

The catalysed reaction is carbamoyl phosphate + L-aspartate = N-carbamoyl-L-aspartate + phosphate + H(+). It participates in pyrimidine metabolism; UMP biosynthesis via de novo pathway; (S)-dihydroorotate from bicarbonate: step 2/3. Functionally, catalyzes the condensation of carbamoyl phosphate and aspartate to form carbamoyl aspartate and inorganic phosphate, the committed step in the de novo pyrimidine nucleotide biosynthesis pathway. This chain is Aspartate carbamoyltransferase catalytic subunit, found in Clostridium novyi (strain NT).